Consider the following 245-residue polypeptide: 1-(5-phosphoribosyl)-5-[(5-phosphoribosylamino)methylideneamino] imidazole-4-carboxamide isomerase (245 aa).

Asp-7 serves as the catalytic Proton acceptor. The active-site Proton donor is Asp-129.

Belongs to the HisA/HisF family.

The protein localises to the cytoplasm. The catalysed reaction is 1-(5-phospho-beta-D-ribosyl)-5-[(5-phospho-beta-D-ribosylamino)methylideneamino]imidazole-4-carboxamide = 5-[(5-phospho-1-deoxy-D-ribulos-1-ylimino)methylamino]-1-(5-phospho-beta-D-ribosyl)imidazole-4-carboxamide. It functions in the pathway amino-acid biosynthesis; L-histidine biosynthesis; L-histidine from 5-phospho-alpha-D-ribose 1-diphosphate: step 4/9. This Escherichia coli O7:K1 (strain IAI39 / ExPEC) protein is 1-(5-phosphoribosyl)-5-[(5-phosphoribosylamino)methylideneamino] imidazole-4-carboxamide isomerase.